The primary structure comprises 376 residues: Dihydroorotate dehydrogenase (quinone) (376 aa).

Residues 78–82 (AGFDK) and T102 contribute to the FMN site. K82 lines the substrate pocket. Substrate is bound at residue 127-131 (NRMGF). FMN-binding residues include N157 and N190. N190 is a substrate binding site. Catalysis depends on S193, which acts as the Nucleophile. A substrate-binding site is contributed by N195. Residues K228 and T256 each coordinate FMN. Substrate is bound at residue 257–258 (NT). FMN is bound by residues G286, G315, and 336-337 (YT).

This sequence belongs to the dihydroorotate dehydrogenase family. Type 2 subfamily. Monomer. FMN is required as a cofactor.

It localises to the cell membrane. The catalysed reaction is (S)-dihydroorotate + a quinone = orotate + a quinol. Its pathway is pyrimidine metabolism; UMP biosynthesis via de novo pathway; orotate from (S)-dihydroorotate (quinone route): step 1/1. Its function is as follows. Catalyzes the conversion of dihydroorotate to orotate with quinone as electron acceptor. The polypeptide is Dihydroorotate dehydrogenase (quinone) (Trichormus variabilis (strain ATCC 29413 / PCC 7937) (Anabaena variabilis)).